Consider the following 273-residue polypeptide: Putative carboxymethylenebutenolidase (273 aa).

Residues Cys130, Asp191, and His223 contribute to the active site.

The protein belongs to the dienelactone hydrolase family.

It carries out the reaction 2-(5-oxo-2,5-dihydrofuran-2-ylidene)acetate + H2O = 4-oxohex-2-enedioate + H(+). The sequence is that of Putative carboxymethylenebutenolidase from Saccharomyces cerevisiae (strain ATCC 204508 / S288c) (Baker's yeast).